The primary structure comprises 218 residues: Capsid protein (218 aa).

Residue methionine 1 is modified to N-acetylmethionine; by host. A disordered region spans residues 1–28; sequence MDKSESTSAGRNRRRRPRRGSRSAPSSA. A compositionally biased stretch (basic residues) spans 11-21; it reads RNRRRRPRRGS.

This sequence belongs to the cucumovirus capsid protein family.

It is found in the virion. Capsid protein. Probably binds RNA and plays a role in packaging. The sequence is that of Capsid protein from Cucumis sativus (Cucumber).